The chain runs to 268 residues: Tryptophan synthase alpha chain (268 aa).

Active-site proton acceptor residues include Glu-49 and Asp-60.

The protein belongs to the TrpA family. In terms of assembly, tetramer of two alpha and two beta chains.

It carries out the reaction (1S,2R)-1-C-(indol-3-yl)glycerol 3-phosphate + L-serine = D-glyceraldehyde 3-phosphate + L-tryptophan + H2O. The protein operates within amino-acid biosynthesis; L-tryptophan biosynthesis; L-tryptophan from chorismate: step 5/5. Its function is as follows. The alpha subunit is responsible for the aldol cleavage of indoleglycerol phosphate to indole and glyceraldehyde 3-phosphate. In Aliivibrio fischeri (strain ATCC 700601 / ES114) (Vibrio fischeri), this protein is Tryptophan synthase alpha chain.